The following is a 389-amino-acid chain: MTMMSDLTQDLVEEILSRVPITSLGAVRSTCKGWNALSKERILCIGEPKQQFLGFMMLDYRLCSMRFNLHGILNEDFVSISMYQVETSQVFYCAGLLLCVTREKSSRLIIWNPYLGQTRWINTKTTKTGYNTYALGCDNNKNHKILKVFCDDYQCYYEIYDVKSNSWSAFNVTDPNWHIDYDICALVNGNTYFLTKERILVEDSDEDEDEVETPEILICFDFTAERFGKFLHLPFQFDIDFGDTGGLSCVKEEKLAVLLKRYDQNVIEIWVTTKIEPNVVFWKPFLKVDIETVLGALLDFQLDSFFIDEEKKLAVVFSSNKSKCYKTAYIIGEDRYLKEVDLGECKPLRSPIVCFSSYVPSLVQINQIAVPKRRENKRKRKSKGKGREV.

One can recognise an F-box domain in the interval 2–49 (TMMSDLTQDLVEEILSRVPITSLGAVRSTCKGWNALSKERILCIGEPK).

This chain is F-box protein At3g19880, found in Arabidopsis thaliana (Mouse-ear cress).